The sequence spans 930 residues: Protocadherin gamma-B6 (930 aa).

The N-terminal stretch at 1–30 is a signal peptide; that stretch reads MGGSCAQRRRAGPRQVLFPLLLPFFYPTLC. Cadherin domains lie at 31-133, 134-242, 243-347, 348-452, 453-562, and 570-675; these read EPIR…APQF, DKKE…PPVF, SRDE…SPEI, IITS…APVF, DQTS…APRV, and DGSA…LPDL. Residues 31 to 691 lie on the Extracellular side of the membrane; sequence EPIRYSIPEE…SDPQAELQFY (661 aa). N304, N419, and N545 each carry an N-linked (GlcNAc...) asparagine glycan. Residues 692-712 traverse the membrane as a helical segment; sequence LVVALALISVLFLLAVILAIA. Topologically, residues 713–930 are cytoplasmic; that stretch reads LRLRRSLSPT…KKKSGKKEKK (218 aa). 2 disordered regions span residues 791–839 and 900–930; these read PHGG…WPNN and ATLT…KEKK. Polar residues predominate over residues 800-839; sequence HPETLTSQAPPNTDWRFSQAQRPGTSGSQNGDDTGTWPNN. Over residues 920 to 930 the composition is skewed to basic residues; it reads NKKKSGKKEKK.

The protein resides in the cell membrane. Potential calcium-dependent cell-adhesion protein. May be involved in the establishment and maintenance of specific neuronal connections in the brain. This is Protocadherin gamma-B6 (PCDHGB6) from Pan troglodytes (Chimpanzee).